Here is a 938-residue protein sequence, read N- to C-terminus: ATP-dependent 6-phosphofructokinase subunit beta (938 aa).

The tract at residues methionine 1–serine 552 is N-terminal catalytic PFK domain 1. ATP is bound by residues glycine 185, arginine 249 to cysteine 250, and glycine 279 to serine 282. Mg(2+) is bound at residue aspartate 280. Residues serine 325–aspartate 327, arginine 362, methionine 369–arginine 371, glutamate 426, arginine 454, and histidine 460–arginine 463 each bind beta-D-fructose 6-phosphate. The active-site Proton acceptor is aspartate 327. Residues alanine 553–methionine 566 form an interdomain linker region. The tract at residues lysine 567–leucine 938 is C-terminal regulatory PFK domain 2. Beta-D-fructose 2,6-bisphosphate contacts are provided by residues arginine 637, threonine 695–asparagine 699, arginine 733, glutamine 740–glycine 742, lysine 826, histidine 832–glutamine 835, and arginine 915.

This sequence belongs to the phosphofructokinase type A (PFKA) family. ATP-dependent PFK group I subfamily. Eukaryotic two domain clade 'E' sub-subfamily. As to quaternary structure, heterooctamer of 4 alpha and 4 beta chains. Requires Mg(2+) as cofactor.

The protein localises to the cytoplasm. It carries out the reaction beta-D-fructose 6-phosphate + ATP = beta-D-fructose 1,6-bisphosphate + ADP + H(+). Its pathway is carbohydrate degradation; glycolysis; D-glyceraldehyde 3-phosphate and glycerone phosphate from D-glucose: step 3/4. Allosterically activated by ADP, AMP, or fructose 2,6-bisphosphate, and allosterically inhibited by ATP or citrate. In terms of biological role, catalyzes the phosphorylation of D-fructose 6-phosphate to fructose 1,6-bisphosphate by ATP, the first committing step of glycolysis. This chain is ATP-dependent 6-phosphofructokinase subunit beta (PFK2), found in Kluyveromyces lactis (strain ATCC 8585 / CBS 2359 / DSM 70799 / NBRC 1267 / NRRL Y-1140 / WM37) (Yeast).